Here is a 308-residue protein sequence, read N- to C-terminus: Ribosomal RNA small subunit methyltransferase H (308 aa).

S-adenosyl-L-methionine is bound by residues 35–37, Asp-55, Phe-79, Asp-100, and Gln-107; that span reads GGH.

This sequence belongs to the methyltransferase superfamily. RsmH family.

The protein resides in the cytoplasm. It catalyses the reaction cytidine(1402) in 16S rRNA + S-adenosyl-L-methionine = N(4)-methylcytidine(1402) in 16S rRNA + S-adenosyl-L-homocysteine + H(+). Functionally, specifically methylates the N4 position of cytidine in position 1402 (C1402) of 16S rRNA. The protein is Ribosomal RNA small subunit methyltransferase H of Dechloromonas aromatica (strain RCB).